Consider the following 385-residue polypeptide: Tuliposide A-converting enzyme 1, chloroplastic (385 aa).

The N-terminal 77 residues, 1-77 (MSVASFFSSL…PSPSLSPTPT (77 aa)), are a transit peptide targeting the chloroplast. Catalysis depends on Ser-235, which acts as the Acyl-ester intermediate. Residues Asp-327 and His-359 each act as charge relay system in the active site.

This sequence belongs to the AB hydrolase superfamily. Homodimer. In terms of tissue distribution, expressed in roots, stems, leaves, petals, stamens and pistils, but not in bulb scales.

It is found in the plastid. The protein resides in the chloroplast. It carries out the reaction 6-tuliposide A = tulipalin A + D-glucose. Its activity is regulated as follows. Inhibited by NaF, AgNO(3), HgCl(2), CuSO(4) and phenylmethylsulfonyl fluoride (PMSF). Lactone-forming carboxylesterases, specifically catalyzing intramolecular transesterification, but not hydrolysis. Involved in the biosynthesis of tulipalins, defensive chemicals that show antimicrobial activities against a broad range of strains of bacteria and fungi. Substrates are 6-tuliposide A &gt; 6-tuliposide B. The polypeptide is Tuliposide A-converting enzyme 1, chloroplastic (TCEA1) (Tulipa gesneriana (Garden tulip)).